The following is a 40-amino-acid chain: Chitin-binding protein 4 (40 aa).

In terms of processing, N-glycosylated.

Chitin-binding protein. Has antifungal activity against C.krusei, C.albicans, C.tropicalis and C.parapsilosis. Has antinociceptive and anti-inflammatory activity in mice. This chain is Chitin-binding protein 4, found in Moringa oleifera (Horseradish tree).